Reading from the N-terminus, the 241-residue chain is NAD(P)H-quinone oxidoreductase subunit K (241 aa).

[4Fe-4S] cluster-binding residues include Cys-60, Cys-61, Cys-125, and Cys-156. A disordered region spans residues 220–241 (SSQKEKITELPEKTEITNTEKD). A compositionally biased stretch (basic and acidic residues) spans 222 to 241 (QKEKITELPEKTEITNTEKD).

The protein belongs to the complex I 20 kDa subunit family. NDH-1 can be composed of about 15 different subunits; different subcomplexes with different compositions have been identified which probably have different functions. The cofactor is [4Fe-4S] cluster.

Its subcellular location is the cellular thylakoid membrane. It catalyses the reaction a plastoquinone + NADH + (n+1) H(+)(in) = a plastoquinol + NAD(+) + n H(+)(out). The catalysed reaction is a plastoquinone + NADPH + (n+1) H(+)(in) = a plastoquinol + NADP(+) + n H(+)(out). NDH-1 shuttles electrons from an unknown electron donor, via FMN and iron-sulfur (Fe-S) centers, to quinones in the respiratory and/or the photosynthetic chain. The immediate electron acceptor for the enzyme in this species is believed to be plastoquinone. Couples the redox reaction to proton translocation, and thus conserves the redox energy in a proton gradient. Cyanobacterial NDH-1 also plays a role in inorganic carbon-concentration. The sequence is that of NAD(P)H-quinone oxidoreductase subunit K from Prochlorococcus marinus (strain MIT 9215).